A 178-amino-acid chain; its full sequence is CASP-like protein 4D1 (178 aa).

An N-acetylalanine modification is found at alanine 2. Over 2–14 (APPPPAPPSVTLR) the chain is Cytoplasmic. Residues 15-35 (TVLLLLRVLTAAFLLITVVLI) traverse the membrane as a helical segment. Topologically, residues 36-60 (STNTVTLEISSTSIKLPFNDVYAYR) are extracellular. Residues 61-81 (YMLSAAVIGLVYAVVQLFLTI) traverse the membrane as a helical segment. The Cytoplasmic segment spans residues 82 to 97 (SQFATGKTHPLTYQFD). Residues 98–118 (FYGDKVISYLLATGSAAGFGV) form a helical membrane-spanning segment. Residues 119–149 (SKDLKDTYIALIEFDSTDPVDKFFSKGYASA) are Extracellular-facing. The chain crosses the membrane as a helical span at residues 150-170 (SLLLFAFVSLAVLSVFSSLAL). The Cytoplasmic segment spans residues 171 to 178 (SKRPVPVS).

Belongs to the Casparian strip membrane proteins (CASP) family. As to quaternary structure, homodimer and heterodimers. As to expression, expressed in the root epidermis.

Its subcellular location is the cell membrane. In Arabidopsis thaliana (Mouse-ear cress), this protein is CASP-like protein 4D1.